The following is a 521-amino-acid chain: ATP synthase subunit beta (521 aa).

Composition is skewed to low complexity over residues 1-21 and 28-42; these read MAKA…AAKA and PKTT…TKSG. The interval 1–42 is disordered; the sequence is MAKAATPKTTAAAEAKPAAKAPAKKAAPKTTAAAKPAATKSG. 199 to 206 contacts ATP; it reads GGAGVGKT.

Belongs to the ATPase alpha/beta chains family. F-type ATPases have 2 components, CF(1) - the catalytic core - and CF(0) - the membrane proton channel. CF(1) has five subunits: alpha(3), beta(3), gamma(1), delta(1), epsilon(1). CF(0) has three main subunits: a(1), b(2) and c(9-12). The alpha and beta chains form an alternating ring which encloses part of the gamma chain. CF(1) is attached to CF(0) by a central stalk formed by the gamma and epsilon chains, while a peripheral stalk is formed by the delta and b chains.

It localises to the cell inner membrane. The enzyme catalyses ATP + H2O + 4 H(+)(in) = ADP + phosphate + 5 H(+)(out). Its function is as follows. Produces ATP from ADP in the presence of a proton gradient across the membrane. The catalytic sites are hosted primarily by the beta subunits. This is ATP synthase subunit beta from Brucella abortus (strain 2308).